The sequence spans 247 residues: Segregation and condensation protein A (247 aa).

This sequence belongs to the ScpA family. In terms of assembly, component of a cohesin-like complex composed of ScpA, ScpB and the Smc homodimer, in which ScpA and ScpB bind to the head domain of Smc. The presence of the three proteins is required for the association of the complex with DNA.

It localises to the cytoplasm. Its function is as follows. Participates in chromosomal partition during cell division. May act via the formation of a condensin-like complex containing Smc and ScpB that pull DNA away from mid-cell into both cell halves. The chain is Segregation and condensation protein A from Bacillus cereus (strain AH187).